The primary structure comprises 478 residues: MADRQSLEEALRRIWGYDHFRYPQGEVIDCLLARRDCLVVLPTGGGKSICFQLPALLGEGLTLVVSPLVALMEDQVQSLRRQNLPAACLHSQLSRPERKQVLYQLGQQQLKLLYLSPETLLSEPVWNLLRQPQVKLQGIMLDEAHCLVQWGDSFRPAYRRLGALRRGLGRDKGQIPLAAFTATADRQQQNLIVEGLNLRSPECFQVSPHRPQLHLKVKMVLSEYCRRQQLRRFLLKHLQESGLIYVRTRTMAINLAQWLQERGFDSEAYHGGLGPHQRRQLEQKWLTGQISSVVCTNAFGLGIDKPDTRWVLHYQAPLMLMDYLQEVGRAGRDLQPAECLTLVSEPTGWLDSGDRQLRQYFLSQASKYLQRAEVLSQQIPSQGNLGQLKAHFPDLEMALAWLHRRGNLEWLDPFNYRINPGHYQANPLEELKSQYRLMTQYLTTSRCRWQTILVAFGDNSPAARRPCGTCDNCLVGRC.

Residues Ile28–Glu202 enclose the Helicase ATP-binding domain. ATP is bound at residue Leu41 to Ser48. Positions Asp142–His145 match the DEAH box motif. Positions Gln229–Pro380 constitute a Helicase C-terminal domain. Positions 447, 467, 470, and 473 each coordinate Zn(2+).

It belongs to the helicase family. RecQ subfamily. Requires Mg(2+) as cofactor. Zn(2+) serves as cofactor.

The enzyme catalyses Couples ATP hydrolysis with the unwinding of duplex DNA by translocating in the 3'-5' direction.. The catalysed reaction is ATP + H2O = ADP + phosphate + H(+). Its function is as follows. An ATP-dependent DNA helicase which unwinds DNA in a 3'-5' direction. The protein is ATP-dependent DNA helicase RecQ of Synechocystis sp. (strain ATCC 27184 / PCC 6803 / Kazusa).